The primary structure comprises 460 residues: 25S rRNA (cytosine-C(5))-methyltransferase rcm1 (460 aa).

Residues 223-229 (CAAPGNK), E246, D273, and D293 each bind S-adenosyl-L-methionine. C350 serves as the catalytic Nucleophile. A compositionally biased stretch (basic and acidic residues) spans 430–439 (KMYKNDDDTK). Positions 430–460 (KMYKNDDDTKKRKRKKKKKEVKKKARIQGEE) are disordered. Residues 440 to 460 (KRKRKKKKKEVKKKARIQGEE) are compositionally biased toward basic residues.

This sequence belongs to the class I-like SAM-binding methyltransferase superfamily. RsmB/NOP family. In terms of assembly, interacts with trm112.

The protein localises to the nucleus. The protein resides in the nucleolus. It catalyses the reaction a cytidine in 25S rRNA + S-adenosyl-L-methionine = a 5-methylcytidine in 25S rRNA + S-adenosyl-L-homocysteine + H(+). Functionally, S-adenosyl-L-methionine-dependent methyltransferase that specifically methylates the C(5) position of a cytosine in 25S rRNA. This Schizosaccharomyces pombe (strain 972 / ATCC 24843) (Fission yeast) protein is 25S rRNA (cytosine-C(5))-methyltransferase rcm1 (rcm1).